Reading from the N-terminus, the 226-residue chain is Methylamine utilization ferredoxin-type protein MauM (226 aa).

4 consecutive 4Fe-4S ferredoxin-type domains span residues 59-87, 95-127, 136-172, and 180-211; these read PEPE…LASW, TPYF…PLLT, VAVL…LKQI, and QIPT…LLPR. Cys-67, Cys-70, Cys-73, Cys-77, Cys-105, Cys-108, Cys-113, Cys-117, Cys-145, Cys-153, Cys-156, Cys-160, Cys-189, Cys-192, Cys-195, and Cys-199 together coordinate [4Fe-4S] cluster.

It functions in the pathway one-carbon metabolism; methylamine degradation. In terms of biological role, involved in electron transfer. The chain is Methylamine utilization ferredoxin-type protein MauM (mauM) from Methylophilus methylotrophus (Bacterium W3A1).